Reading from the N-terminus, the 43-residue chain is VTCDLLSFEAKGFAANHSLCAAHCLAIGRRGGSCERGVCICRR.

Intrachain disulfides connect Cys3-Cys34, Cys20-Cys39, and Cys24-Cys41.

It localises to the secreted. In terms of biological role, antibacterial peptide. Affects Gram-negative bacteria including methicillin-resistant Staphylococcus aureus. This is Defensin from Trypoxylus dichotomus (Japanese rhinoceros beetle).